Consider the following 556-residue polypeptide: Formate--tetrahydrofolate ligase (556 aa).

65-72 is an ATP binding site; it reads TSAGEGKT.

Belongs to the formate--tetrahydrofolate ligase family.

The catalysed reaction is (6S)-5,6,7,8-tetrahydrofolate + formate + ATP = (6R)-10-formyltetrahydrofolate + ADP + phosphate. It functions in the pathway one-carbon metabolism; tetrahydrofolate interconversion. The sequence is that of Formate--tetrahydrofolate ligase from Kosmotoga olearia (strain ATCC BAA-1733 / DSM 21960 / TBF 19.5.1).